A 41-amino-acid polypeptide reads, in one-letter code: Large ribosomal subunit protein bL36 (41 aa).

It belongs to the bacterial ribosomal protein bL36 family.

This Stenotrophomonas maltophilia (strain R551-3) protein is Large ribosomal subunit protein bL36.